The primary structure comprises 465 residues: Dihydrolipoyllysine-residue acetyltransferase component 5 of pyruvate dehydrogenase complex, chloroplastic (465 aa).

The transit peptide at 1–31 directs the protein to the chloroplast; it reads MSRLLQTPFLPSVSLPTKTRSSVTGFRVKPR. Residues 39-114 enclose the Lipoyl-binding domain; that stretch reads IREIFMPALS…PVGSAIALLA (76 aa). Residue Lys80 is modified to N6-lipoyllysine. The disordered stretch occupies residues 123 to 148; that stretch reads AKAKASGGGGGGDSKAPPASPPTAAV. The segment covering 136-148 has biased composition (low complexity); the sequence is SKAPPASPPTAAV. One can recognise a Peripheral subunit-binding (PSBD) domain in the interval 184 to 221; sequence VASPYAKKLAKELKVELAGLVGSGPMGRIVAKDVEAVA. His438 is an active-site residue.

The protein belongs to the 2-oxoacid dehydrogenase family. It depends on (R)-lipoate as a cofactor.

The protein resides in the plastid. It is found in the chloroplast stroma. It catalyses the reaction N(6)-[(R)-dihydrolipoyl]-L-lysyl-[protein] + acetyl-CoA = N(6)-[(R)-S(8)-acetyldihydrolipoyl]-L-lysyl-[protein] + CoA. Its function is as follows. The pyruvate dehydrogenase complex catalyzes the overall conversion of pyruvate to acetyl-CoA and CO(2). It contains multiple copies of three enzymatic components: pyruvate dehydrogenase (E1), dihydrolipoamide acetyltransferase (E2) and lipoamide dehydrogenase (E3). This chain is Dihydrolipoyllysine-residue acetyltransferase component 5 of pyruvate dehydrogenase complex, chloroplastic (EMB3003), found in Arabidopsis thaliana (Mouse-ear cress).